Here is a 387-residue protein sequence, read N- to C-terminus: MKKILGIESSCDDTAISIITERRKILSNIIISQNTEHAVFGGVVPEIAARSHLSNLDQALKNVLKKSNTELTEISAIAATSGPGLIGGVIVGSMFARSLSSALKKPFIAINHLEGHALTARLTDNISYPYLLLLASGGHCQFVAVLGLGKYKILGTTIDDAVGETFDKVAKMLNLSFPGGPEIEKRAKLGNPHKYKFPKPIINSGNCNMSFSGLKTAVRTLIMNLKEVNDSVINDIAASFQFTIGAILSSKMQDAIRLYKQILNDYYEDINHPTKLNLKSFRKDEFNWKPLECITRPKYRIHIQNSYRSNLLNDTIVIAGGVAANKYLQEILSDCTRPYGYRLIAPPMHLCTDNAAMIAYAGLERYNNKLFSPLDFCPKAKWSLEDI.

Fe cation contacts are provided by His-112 and His-116. Substrate contacts are provided by residues 134-138 (LASGG), Asp-167, Gly-180, and Asn-325. Position 353 (Asp-353) interacts with Fe cation.

This sequence belongs to the KAE1 / TsaD family. The cofactor is Fe(2+).

The protein resides in the cytoplasm. It carries out the reaction L-threonylcarbamoyladenylate + adenosine(37) in tRNA = N(6)-L-threonylcarbamoyladenosine(37) in tRNA + AMP + H(+). Its function is as follows. Required for the formation of a threonylcarbamoyl group on adenosine at position 37 (t(6)A37) in tRNAs that read codons beginning with adenine. Is involved in the transfer of the threonylcarbamoyl moiety of threonylcarbamoyl-AMP (TC-AMP) to the N6 group of A37, together with TsaE and TsaB. TsaD likely plays a direct catalytic role in this reaction. The protein is tRNA N6-adenosine threonylcarbamoyltransferase of Rickettsia prowazekii (strain Madrid E).